The following is a 269-amino-acid chain: L-cystine-binding protein TcyJ (269 aa).

The N-terminal stretch at 1 to 20 (MNKRKGLVLLLSVFALLGGG) is a signal peptide. Residue C21 is the site of N-palmitoyl cysteine attachment. C21 is lipidated: S-diacylglycerol cysteine.

It belongs to the bacterial solute-binding protein 3 family. As to quaternary structure, the complex is composed of two ATP-binding proteins (TcyN), two transmembrane proteins (TcyL and TcyM) and two solute-binding proteins (TcyJ and TcyK).

It localises to the cell membrane. Functionally, part of the ABC transporter complex TcyJKLMN involved in L-cystine import. Is also involved in cystathionine, djenkolate, and S-methylcysteine transport. This Bacillus subtilis (strain 168) protein is L-cystine-binding protein TcyJ (tcyJ).